A 160-amino-acid polypeptide reads, in one-letter code: 6,7-dimethyl-8-ribityllumazine synthase (160 aa).

5-amino-6-(D-ribitylamino)uracil is bound by residues Phe23, 61 to 63 (SFE), and 85 to 87 (AVI). 90-91 (DT) contributes to the (2S)-2-hydroxy-3-oxobutyl phosphate binding site. His93 acts as the Proton donor in catalysis. Phe118 is a binding site for 5-amino-6-(D-ribitylamino)uracil. Arg132 lines the (2S)-2-hydroxy-3-oxobutyl phosphate pocket.

It belongs to the DMRL synthase family.

The enzyme catalyses (2S)-2-hydroxy-3-oxobutyl phosphate + 5-amino-6-(D-ribitylamino)uracil = 6,7-dimethyl-8-(1-D-ribityl)lumazine + phosphate + 2 H2O + H(+). It functions in the pathway cofactor biosynthesis; riboflavin biosynthesis; riboflavin from 2-hydroxy-3-oxobutyl phosphate and 5-amino-6-(D-ribitylamino)uracil: step 1/2. Its function is as follows. Catalyzes the formation of 6,7-dimethyl-8-ribityllumazine by condensation of 5-amino-6-(D-ribitylamino)uracil with 3,4-dihydroxy-2-butanone 4-phosphate. This is the penultimate step in the biosynthesis of riboflavin. The polypeptide is 6,7-dimethyl-8-ribityllumazine synthase (Parasynechococcus marenigrum (strain WH8102)).